A 312-amino-acid chain; its full sequence is Methionyl-tRNA formyltransferase (312 aa).

109-112 (SLLP) is a binding site for (6S)-5,6,7,8-tetrahydrofolate.

The protein belongs to the Fmt family.

The enzyme catalyses L-methionyl-tRNA(fMet) + (6R)-10-formyltetrahydrofolate = N-formyl-L-methionyl-tRNA(fMet) + (6S)-5,6,7,8-tetrahydrofolate + H(+). In terms of biological role, attaches a formyl group to the free amino group of methionyl-tRNA(fMet). The formyl group appears to play a dual role in the initiator identity of N-formylmethionyl-tRNA by promoting its recognition by IF2 and preventing the misappropriation of this tRNA by the elongation apparatus. The protein is Methionyl-tRNA formyltransferase of Anaeromyxobacter sp. (strain K).